The primary structure comprises 336 residues: Ornithine carbamoyltransferase, catabolic (336 aa).

Residues 57–60 (STRT), Q84, R108, and 135–138 (HPTQ) each bind carbamoyl phosphate. L-ornithine-binding positions include N168, D232, and 236–237 (SM). Carbamoyl phosphate contacts are provided by residues 274–275 (CL) and R321.

It belongs to the aspartate/ornithine carbamoyltransferase superfamily. OTCase family.

The protein localises to the cytoplasm. It carries out the reaction carbamoyl phosphate + L-ornithine = L-citrulline + phosphate + H(+). Its pathway is amino-acid degradation; L-arginine degradation via ADI pathway; carbamoyl phosphate from L-arginine: step 2/2. Reversibly catalyzes the transfer of the carbamoyl group from carbamoyl phosphate (CP) to the N(epsilon) atom of ornithine (ORN) to produce L-citrulline. This chain is Ornithine carbamoyltransferase, catabolic, found in Burkholderia pseudomallei (strain K96243).